The primary structure comprises 188 residues: UPF0398 protein SSP1297 (188 aa).

This sequence belongs to the UPF0398 family.

The polypeptide is UPF0398 protein SSP1297 (Staphylococcus saprophyticus subsp. saprophyticus (strain ATCC 15305 / DSM 20229 / NCIMB 8711 / NCTC 7292 / S-41)).